The primary structure comprises 465 residues: MKHIVKHIHFVGIGGAGMSGIAEVLVNLGYEVSGSDLSRNAVTDRLAALGARIAIGHDAANIEGANAVVVSTAVRSDNPEVLAARHQRVPIVQRAVMLAELMRLKQGIAIAGTHGKTTTTSLVASVLAAGGLDPTFVIGGRLISAGANARLGTGDFIVAEADESDASFLNLYPVIEVITNIDADHMDTYGHDFARLKQAFIEFTQRLPFYGSAVVCVDDPNVRQIIPFISKPVVRYGLSADAQVRAENIDARDGRMHFTVIREGRSPLAVVLNLPGLHNVQNALAAIAIATDLGVSDDAIQLALAEFNGVGRRFQRYGEVPSADGGQYTLIDDYGHHPVEMAATIAAARGAFPGRRLVLAFQPHRYTRTRDCFDDFVNVLSTVDALVLTEVYAAGEAAIATANGDALSRALRTVGKVDPVFVATVDDVPDALAKVARNGDVVITMGAGSIGGVPAKIVQNTQQKG.

112 to 118 (GTHGKTT) provides a ligand contact to ATP.

It belongs to the MurCDEF family.

It localises to the cytoplasm. It catalyses the reaction UDP-N-acetyl-alpha-D-muramate + L-alanine + ATP = UDP-N-acetyl-alpha-D-muramoyl-L-alanine + ADP + phosphate + H(+). The protein operates within cell wall biogenesis; peptidoglycan biosynthesis. In terms of biological role, cell wall formation. This is UDP-N-acetylmuramate--L-alanine ligase from Burkholderia vietnamiensis (strain G4 / LMG 22486) (Burkholderia cepacia (strain R1808)).